Reading from the N-terminus, the 301-residue chain is Homeobox protein Nkx-2.6 (301 aa).

The interval 22–135 (ERSCPAASPH…QPKARQRRKP (114 aa)) is disordered. Residues 132–191 (RRKPRVLFSQAQVLALERRFKQQRYLSAPEREHLASALQLTSTQVKIWFQNRRYKCKRQR) constitute a DNA-binding region (homeobox).

The protein belongs to the NK-2 homeobox family.

It is found in the nucleus. Functionally, acts as a transcriptional activator. In conjunction with NKX2-5, may play a role in both pharyngeal and cardiac embryonic development. The sequence is that of Homeobox protein Nkx-2.6 (NKX2-6) from Homo sapiens (Human).